The primary structure comprises 404 residues: MVYSPMSRPQVPLAFRQWPPYNYKSDPLVNSKLSQSTTSVNAGPSLISPSFLDSYANSSSLLHKPSTNLGSLKTSSLLASDEVFPSSVMPQLRPLDSSLSVSPEMDGWPWHHNSSSNPQGYAWTPSLLSSNATSYLHSGSSPHGNTSNHPSPISSLESLPSRSSTGSGSLDFSGLANLHDDSKSLAMSLNMAGVPVSVDENSQTSFPFVHGQPESTMSRKPKLCVQSKSMTNIRNSVAKPSLVRQSHSAGVIPIKPTASNASIRNAPSNLSKQFSPSGNSPLTEASKPFVPQPSAAGDFRQAKGSASHPHGSGSSNGVAPNGKRALYKTEPCKNWQISGTCRYGSKCQFAHGNQELKEPPRHPKYKSERCRSFMMYGYCPYGLRCCFLHDESNAQKSATIKQSP.

Positions 134–149 (SYLHSGSSPHGNTSNH) are enriched in polar residues. Disordered stretches follow at residues 134 to 168 (SYLH…TGSG) and 259 to 322 (SNAS…APNG). Low complexity predominate over residues 150-168 (PSPISSLESLPSRSSTGSG). Polar residues predominate over residues 259-283 (SNASIRNAPSNLSKQFSPSGNSPLT). The segment covering 304–317 (GSASHPHGSGSSNG) has biased composition (low complexity). 2 C3H1-type zinc fingers span residues 326–354 (LYKT…HGNQ) and 364–392 (KYKS…HDES).

As to quaternary structure, interacts with moc3.

The protein localises to the cytoplasm. The protein resides in the nucleus. Functionally, binds to specific AU-rich elements (ARE) in the 3'-untranslated region of target mRNAs and promotes their degradation. Binds to ARE present in the arz1 mRNA and stimulates the rate of arz1 mRNA decay. Required for coordination of septum formation with exit from mitosis. Involved in the mating response pathway. Induces sexual development and ascus formation. This Schizosaccharomyces pombe (strain 972 / ATCC 24843) (Fission yeast) protein is Zinc finger protein zfs1 (zfs1).